The chain runs to 317 residues: Tegument protein UL14 homolog (317 aa).

Residues 166 to 291 are disordered; sequence IAADPHSPRS…QKWLGGIPPL (126 aa). Positions 182–195 are enriched in basic and acidic residues; it reads KAPEDARCGARKPG. The span at 198-211 shows a compositional bias: polar residues; it reads NNYTPSAQPRSQET. Basic and acidic residues-rich tracts occupy residues 217 to 236 and 249 to 265; these read ASPDEGTRLGDRTRDLEHHS and SERRRLGVVHQREKSSE.

This sequence belongs to the alphaherpesvirinae HHV-1 UL14 protein family.

It localises to the virion tegument. It is found in the host cytoplasm. The protein resides in the host nucleus. In terms of biological role, contributes to the nuclear transport of the viral transcriptional activator VP16 during the early phase of infection. Therefore, participates indirectly in the regulation of the immediate-early gene expression. Additionally, seems to be important for efficient nuclear targeting of capsids. In Equus caballus (Horse), this protein is Tegument protein UL14 homolog.